The sequence spans 350 residues: MSLLCYNKGCGQHFDPNTNLPDSCRYHPGVPIFHDALKGWSCCRKRTVDFSEFLNIKGCTVGLHCAEKLPEVPPQPEGPATSSLQEQKPLNTIPKSAETLFRERPKSEMPPKLLPLLISQALGVALEQKELDQEPGAGLDNSLIWTGSSCQNPGCDAVYQGPESDATPCTYHPGAPRFHEGMKSWSCCGIQTLDFGAFLAQPGCRVGRHDWAKQLPASCRHDWHQTDSVVVLTVYGQIPLPAFNWVKASQTELHVHIVFDGNRVFQAQMKLWGVINVEQSSVSLMPSRVEISLVKADPGSWAQLEHPDSLAEKARAGVLLEMDEEESEDSDDDLSWTEEEDEEEEEAMGE.

Zn(2+) contacts are provided by C5, C10, C24, and H27. The region spanning 5–64 (CYNKGCGQHFDPNTNLPDSCRYHPGVPIFHDALKGWSCCRKRTVDFSEFLNIKGCTVGLH) is the CHORD 1 domain. Residues 28–31 (PGVP) carry the SH3-binding motif. Zn(2+) contacts are provided by C42, C43, C59, and H64. Positions 70-79 (PEVPPQPEGP) match the SH3-binding motif. The disordered stretch occupies residues 72–92 (VPPQPEGPATSSLQEQKPLNT). Residues 80–92 (ATSSLQEQKPLNT) show a composition bias toward polar residues. Positions 150 and 155 each coordinate Zn(2+). The region spanning 150–209 (CQNPGCDAVYQGPESDATPCTYHPGAPRFHEGMKSWSCCGIQTLDFGAFLAQPGCRVGRH) is the CHORD 2 domain. The short motif at 159–162 (YQGP) is the SH2-binding element. Zn(2+) contacts are provided by C169 and H172. Positions 173–176 (PGAP) match the SH3-binding motif. C187, C188, C204, and H209 together coordinate Zn(2+). Residues 216-305 (PASCRHDWHQ…ADPGSWAQLE (90 aa)) form the CS domain. Residues 235–238 (YGQI) carry the SH2-binding motif. The interval 317–350 (GVLLEMDEEESEDSDDDLSWTEEEDEEEEEAMGE) is disordered. Acidic residues predominate over residues 321 to 350 (EMDEEESEDSDDDLSWTEEEDEEEEEAMGE).

As to quaternary structure, interacts with beta-1 integrin subunit. This interaction is regulated by divalent cations, and it occurs only in absence of calcium. As to expression, expressed in skeletal and cardiac muscles but not in other tissues. Is localized in rows flanking the Z line containing alpha-actinin.

Its function is as follows. May play a role during maturation and/or organization of muscles cells. The protein is Integrin beta-1-binding protein 2 (Itgb1bp2) of Mus musculus (Mouse).